Reading from the N-terminus, the 449-residue chain is MEKMEEKKRIVLVPVPAQRHVTPMMQLGTALNMKGFSITVVEGQFNKVSSSQNFPGFQFVTIPDTESLPESVLERLGPVEFLFEINKTSEASFKDCIRQSLLQQGNDIACIIYDEYMYFCGAAAKEFNLPSVIFSTQSATNQVSRCVLRKLSAEKFLVDMEDPEVQETLVENLHPLRYKDLPTSGVGPLDRLFELCREIVNKRTASAVIINTVRCLESSSLKRLQHELGIPVYALGPLHITVSAASSLLEEDRSCVEWLNKQKPRSVVYISLGSVVQMETKEVLEMARGLFNSNQPFLWVIRPGSIAGSEWIESLPEEVIKMVSERGYIVKWAPQIEVLGHPAVGGFWSHCGWNSTLESIVEGVPMICRPFHGEQKLNALCLESIWRIGFQVQGKVERGGVERAVKRLIVDEEGADMRERALVLKENLKASVRNGGSSYNALEEIVNLM.

Residues serine 274, alanine 333–glutamine 335, histidine 350–glutamate 358, and histidine 372–glutamine 375 contribute to the UDP-alpha-D-glucose site.

It belongs to the UDP-glycosyltransferase family.

The protein is UDP-glycosyltransferase 76E6 (UGT76E6) of Arabidopsis thaliana (Mouse-ear cress).